The chain runs to 145 residues: Regulator of sigma D (145 aa).

The protein belongs to the Rsd/AlgQ family. Interacts with RpoD.

It localises to the cytoplasm. Functionally, binds RpoD and negatively regulates RpoD-mediated transcription activation by preventing the interaction between the primary sigma factor RpoD with the catalytic core of the RNA polymerase and with promoter DNA. May be involved in replacement of the RNA polymerase sigma subunit from RpoD to RpoS during the transition from exponential growth to the stationary phase. The protein is Regulator of sigma D of Sodalis glossinidius (strain morsitans).